The following is a 177-amino-acid chain: Large ribosomal subunit protein uL6 (177 aa).

The protein belongs to the universal ribosomal protein uL6 family. Part of the 50S ribosomal subunit.

Functionally, this protein binds to the 23S rRNA, and is important in its secondary structure. It is located near the subunit interface in the base of the L7/L12 stalk, and near the tRNA binding site of the peptidyltransferase center. The polypeptide is Large ribosomal subunit protein uL6 (Rickettsia prowazekii (strain Madrid E)).